A 62-amino-acid polypeptide reads, in one-letter code: Sperm protamine P1 (62 aa).

The disordered stretch occupies residues M1–R46.

This sequence belongs to the protamine P1 family. As to expression, testis.

Its subcellular location is the nucleus. The protein resides in the chromosome. Functionally, protamines substitute for histones in the chromatin of sperm during the haploid phase of spermatogenesis. They compact sperm DNA into a highly condensed, stable and inactive complex. The polypeptide is Sperm protamine P1 (PRM1) (Planigale gilesi (Flat-skulled marsupial mouse)).